Here is a 369-residue protein sequence, read N- to C-terminus: DNA replication and repair protein RecF (369 aa).

30–37 (GDNAQGKT) lines the ATP pocket.

It belongs to the RecF family.

It is found in the cytoplasm. Functionally, the RecF protein is involved in DNA metabolism; it is required for DNA replication and normal SOS inducibility. RecF binds preferentially to single-stranded, linear DNA. It also seems to bind ATP. The chain is DNA replication and repair protein RecF from Streptococcus equi subsp. zooepidemicus (strain MGCS10565).